Here is a 305-residue protein sequence, read N- to C-terminus: tRNA dimethylallyltransferase (305 aa).

11-18 (GPTAVGKT) contributes to the ATP binding site. Residue 13 to 18 (TAVGKT) participates in substrate binding. The interval 36–39 (DSMQ) is interaction with substrate tRNA.

Belongs to the IPP transferase family. In terms of assembly, monomer. Mg(2+) is required as a cofactor.

The enzyme catalyses adenosine(37) in tRNA + dimethylallyl diphosphate = N(6)-dimethylallyladenosine(37) in tRNA + diphosphate. In terms of biological role, catalyzes the transfer of a dimethylallyl group onto the adenine at position 37 in tRNAs that read codons beginning with uridine, leading to the formation of N6-(dimethylallyl)adenosine (i(6)A). The protein is tRNA dimethylallyltransferase of Listeria monocytogenes serovar 1/2a (strain ATCC BAA-679 / EGD-e).